Reading from the N-terminus, the 346-residue chain is Serine/threonine-protein phosphatase PP1(5.9) (346 aa).

Mn(2+)-binding residues include Asp102, His104, Asp130, and Asn162. His163 (proton donor) is an active-site residue. His211 and His287 together coordinate Mn(2+).

This sequence belongs to the PPP phosphatase family. PP-1 subfamily. The cofactor is Mn(2+).

It carries out the reaction O-phospho-L-seryl-[protein] + H2O = L-seryl-[protein] + phosphate. The catalysed reaction is O-phospho-L-threonyl-[protein] + H2O = L-threonyl-[protein] + phosphate. The sequence is that of Serine/threonine-protein phosphatase PP1(5.9) from Trypanosoma brucei brucei.